Here is a 146-residue protein sequence, read N- to C-terminus: Snaclec alboaggregin-B subunit beta (146 aa).

An N-terminal signal peptide occupies residues 1–23 (MGRFIFGSFGLLVLFLSLSGTGA). The 120-residue stretch at 24–143 (DCPSDWSSYD…CSRTYPFVCK (120 aa)) folds into the C-type lectin domain. Intrachain disulfides connect Cys-25–Cys-36, Cys-53–Cys-142, and Cys-119–Cys-134.

The protein belongs to the snaclec family. In terms of assembly, heterodimer of subunits alpha and beta; disulfide-linked. As to expression, expressed by the venom gland.

It localises to the secreted. In terms of biological role, weakly agglutinates platelets at high doses by binding to GPIbalpha (GP1BA). The chain is Snaclec alboaggregin-B subunit beta from Trimeresurus albolabris (White-lipped pit viper).